The primary structure comprises 1001 residues: uncharacterized protein (1001 aa).

The segment covering 939–948 (KVVDNKRDAS) has biased composition (basic and acidic residues). The segment at 939–1001 (KVVDNKRDAS…HTSKRVQKKN (63 aa)) is disordered. Phosphoserine is present on residues S948 and S950.

This is an uncharacterized protein from Schizosaccharomyces pombe (strain 972 / ATCC 24843) (Fission yeast).